The sequence spans 58 residues: Preprotein translocase subunit SecG (58 aa).

Topologically, residues methionine 1 to serine 33 are cytoplasmic. Residues proline 34–leucine 55 form a helical membrane-spanning segment. The Extracellular segment spans residues proline 56–leucine 58.

This sequence belongs to the SEC61-beta family. Component of the protein translocase complex. Heterotrimer consisting of alpha (SecY), beta (SecG) and gamma (SecE) subunits. Can form oligomers of the heterotrimer.

The protein localises to the cell membrane. Its function is as follows. Involved in protein export. The function of the beta subunit is unknown, but it may be involved in stabilization of the trimeric complex. This chain is Preprotein translocase subunit SecG, found in Pyrobaculum arsenaticum (strain DSM 13514 / JCM 11321 / PZ6).